The sequence spans 180 residues: Trafficking protein particle complex subunit 3 (180 aa).

Residue Cys-68 is the site of S-palmitoyl cysteine attachment.

This sequence belongs to the TRAPP small subunits family. BET3 subfamily. In terms of assembly, homodimer. Component of the multisubunit transport protein particle (TRAPP) complex, which includes at least TRAPPC2, TRAPPC2L, TRAPPC3, TRAPPC3L, TRAPPC4, TRAPPC5, TRAPPC8, TRAPPC9, TRAPPC10, TRAPPC11 and TRAPPC12. Heterodimer with TRAPPC6A. The heterodimer TRAPPC3-TRAPPC6A interacts with TRAPPC2L. Heterodimer with TRAPPC6b. The heterodimer TRAPPC6B-TRAPPC3 interacts with TRAPPC1 likely providing a core for TRAPP complex formation.

Its subcellular location is the golgi apparatus. The protein resides in the cis-Golgi network. It localises to the endoplasmic reticulum. Its function is as follows. May play a role in vesicular transport from endoplasmic reticulum to Golgi. This Homo sapiens (Human) protein is Trafficking protein particle complex subunit 3.